A 441-amino-acid chain; its full sequence is MGLSNDRIKFNVGGRIFETTATTLANAGRDSFFGALFDENWNLSQPGDLFIDRNPDCFAVLLDLLRTGDLNIPPNIPERLLHKEAMFYGLIDHLRTAKWGPFDGNRLHLSRSVTGIAPGDGTAIRAGPDGGCCIAHGSVVHVFDWMLEEHPTINLDYQRVNDVGWIDSGNIVLSACERLGRGDGGMGLFSSSSGELRYKFQVSHDNQVKSYSAGALSFSPDSKIFTSCKGRSNEYGIGVWDQSTGKQVDFFYESPGWSLGDADKLQWLSGKNCLLVATLFPRKDNCYISLLDFREKNMVWSWSDIGFLTMAEEKRVRDAIAMEESNSICVVNEFEDLGFIDLRMDGGGSSVRWSSRSRLMKSKMPDEPCYPKLALHEGQLFSSMNDSISVFCGSDWVLTSRLKRSYGGSICDFSIGGDRLFALHSEENVFDVWETLPPPII.

One can recognise a BTB domain in the interval 6-74 (DRIKFNVGGR…LRTGDLNIPP (69 aa)).

It functions in the pathway protein modification; protein ubiquitination. Functionally, may act as a substrate-specific adapter of an E3 ubiquitin-protein ligase complex (CUL3-RBX1-BTB) which mediates the ubiquitination and subsequent proteasomal degradation of target proteins. This Arabidopsis thaliana (Mouse-ear cress) protein is BTB/POZ domain-containing protein At4g30940.